Consider the following 106-residue polypeptide: Pyrimidine/purine nucleoside phosphorylase (106 aa).

This sequence belongs to the nucleoside phosphorylase PpnP family.

The catalysed reaction is a purine D-ribonucleoside + phosphate = a purine nucleobase + alpha-D-ribose 1-phosphate. It carries out the reaction adenosine + phosphate = alpha-D-ribose 1-phosphate + adenine. It catalyses the reaction cytidine + phosphate = cytosine + alpha-D-ribose 1-phosphate. The enzyme catalyses guanosine + phosphate = alpha-D-ribose 1-phosphate + guanine. The catalysed reaction is inosine + phosphate = alpha-D-ribose 1-phosphate + hypoxanthine. It carries out the reaction thymidine + phosphate = 2-deoxy-alpha-D-ribose 1-phosphate + thymine. It catalyses the reaction uridine + phosphate = alpha-D-ribose 1-phosphate + uracil. The enzyme catalyses xanthosine + phosphate = alpha-D-ribose 1-phosphate + xanthine. Its function is as follows. Catalyzes the phosphorolysis of diverse nucleosides, yielding D-ribose 1-phosphate and the respective free bases. Can use uridine, adenosine, guanosine, cytidine, thymidine, inosine and xanthosine as substrates. Also catalyzes the reverse reactions. This is Pyrimidine/purine nucleoside phosphorylase from Burkholderia ambifaria (strain ATCC BAA-244 / DSM 16087 / CCUG 44356 / LMG 19182 / AMMD) (Burkholderia cepacia (strain AMMD)).